The primary structure comprises 65 residues: Small vasohibin-binding protein (65 aa).

Over residues 1 to 22 the composition is skewed to basic and acidic residues; sequence MEPACRKDKQKQQTPTRGDRTK. Residues 1 to 30 form a disordered region; the sequence is MEPACRKDKQKQQTPTRGDRTKQKTAQQEL. The stretch at 31–51 forms a coiled coil; it reads KQRQRAEIYALNKVMTELEQQ.

It belongs to the SVBP family.

It localises to the cytoplasm. Its subcellular location is the secreted. The protein localises to the cytoskeleton. Its function is as follows. Enhances the tyrosine carboxypeptidase activity of vash1 and vash2, thereby promoting the removal of the C-terminal tyrosine residue of alpha-tubulin. Also required to enhance the solubility and secretion of vash1 and vash2. May play a role in axon and excitatory synapse formation. This chain is Small vasohibin-binding protein, found in Danio rerio (Zebrafish).